The primary structure comprises 951 residues: AP-1 complex subunit beta-1 (951 aa).

At Lys-318 the chain carries N6-acetyllysine. 3'-nitrotyrosine is present on Tyr-574.

The protein belongs to the adaptor complexes large subunit family. As to quaternary structure, adaptor protein complex 1 (AP-1) is a heterotetramer composed of two large adaptins (gamma-type subunit AP1G1 and beta-type subunit AP1B1), a medium adaptin (mu-type subunit AP1M1 or AP1M2) and a small adaptin (sigma-type subunit AP1S1 or AP1S2 or AP1S3).

The protein resides in the cytoplasmic vesicle. The protein localises to the clathrin-coated vesicle membrane. It localises to the golgi apparatus. Functionally, subunit of clathrin-associated adaptor protein complex 1 that plays a role in protein sorting in the late-Golgi/trans-Golgi network (TGN) and/or endosomes. The AP complexes mediate both the recruitment of clathrin to membranes and the recognition of sorting signals within the cytosolic tails of transmembrane cargo molecules. This Bos taurus (Bovine) protein is AP-1 complex subunit beta-1 (AP2B1).